Reading from the N-terminus, the 383-residue chain is Histidine decarboxylase (383 aa).

Residue His-120 participates in substrate binding. Lys-233 is modified (N6-(pyridoxal phosphate)lysine).

Belongs to the group II decarboxylase family. As to quaternary structure, homotetramer. Pyridoxal 5'-phosphate serves as cofactor.

The enzyme catalyses L-histidine + H(+) = histamine + CO2. The chain is Histidine decarboxylase from Acinetobacter baumannii (strain ACICU).